Consider the following 278-residue polypeptide: Biotin synthase (278 aa).

The region spanning methionine 1–arginine 227 is the Radical SAM core domain. Residues cysteine 16, cysteine 20, and cysteine 23 each contribute to the [4Fe-4S] cluster site. [2Fe-2S] cluster is bound by residues cysteine 60, cysteine 95, and cysteine 153.

This sequence belongs to the radical SAM superfamily. Biotin synthase family. Homodimer. Requires [4Fe-4S] cluster as cofactor. The cofactor is [2Fe-2S] cluster.

The enzyme catalyses (4R,5S)-dethiobiotin + (sulfur carrier)-SH + 2 reduced [2Fe-2S]-[ferredoxin] + 2 S-adenosyl-L-methionine = (sulfur carrier)-H + biotin + 2 5'-deoxyadenosine + 2 L-methionine + 2 oxidized [2Fe-2S]-[ferredoxin]. It functions in the pathway cofactor biosynthesis; biotin biosynthesis; biotin from 7,8-diaminononanoate: step 2/2. Its function is as follows. Catalyzes the conversion of dethiobiotin (DTB) to biotin by the insertion of a sulfur atom into dethiobiotin via a radical-based mechanism. In Campylobacter jejuni subsp. jejuni serotype O:23/36 (strain 81-176), this protein is Biotin synthase.